The primary structure comprises 140 residues: Holo-[acyl-carrier-protein] synthase (140 aa).

The Mg(2+) site is built by Asp8 and Glu62.

This sequence belongs to the P-Pant transferase superfamily. AcpS family. It depends on Mg(2+) as a cofactor.

It localises to the cytoplasm. It catalyses the reaction apo-[ACP] + CoA = holo-[ACP] + adenosine 3',5'-bisphosphate + H(+). Transfers the 4'-phosphopantetheine moiety from coenzyme A to a Ser of acyl-carrier-protein. The polypeptide is Holo-[acyl-carrier-protein] synthase (Cupriavidus pinatubonensis (strain JMP 134 / LMG 1197) (Cupriavidus necator (strain JMP 134))).